Here is a 433-residue protein sequence, read N- to C-terminus: MSFTVTKTAPAVITPSEPTPSGHILPLSFFDRLPFLRVFLVDMIMVYGHGDQPAKVIKEAVAKALVHYYPLAGRLTTDTDDGELSVACTGEGVWFVEATADCRMEDVNYLQVEPLMIPKEQILPSHPEGVDPYTLPFMIQVTQFRCGGFTFATRANHAVFDGIGAGQIKVAIGEMARGLKHPTVKPVWCRDVIRKPIPSQISATEPHDTDLSSIPDLKFTNNQTNIECCSFDLSLDHINHLKDHFAKEVGKICSVFDVIAAKLWQSRTRAIGLQPQTEVSLTFLLNIRQVVLHNELPPDGGYYGNCLVPLINKAPSGQIANAPLFEIVRLIKEAKDDLLSKDSASLIGEMPPYKKPSYADLSIVDWRRLGLYEADFGWGGPMFLVPLNEHTVTSCSTYLFKSPVASKKDVRLVTYCIVKEHLEAFRDEMNDFT.

Active-site proton acceptor residues include His157 and Asp375.

It belongs to the plant acyltransferase family. Expressed in young cromes.

It catalyses the reaction myricetin 3-O-[beta-D-glucosyl-(1-&gt;2)-alpha-L-rhamnoside] + (E)-caffeoyl-CoA = myricetin 3-O-[(6-O-(E)-caffeoyl-beta-D-glucosyl)-(1-&gt;2)-alpha-L-rhamnoside] + CoA. Its pathway is flavonoid metabolism. Caffeoyltransferase involved in montbretin A (MbA) biosynthesis. Catalyzes the caffeoylation of myricetin 3-O-beta-D-glucosyl 1,2-alpha-L-rhamnoside (MRG) to produce myricetin 3-O-(6'-O-caffeoyl)-beta-D-glucosyl 1,2-alpha-L-rhamnoside (mini-MbA), a precursor of MbA. Mini-MbA and MbA are potent inhibitors of human pancreatic alpha-amylase and are being developed as drug candidates to treat type-2 diabetes. In vitro, is able to catalyze the caffeoylation of quercetin 3-O-sophoroside (QGG), although QGG may not be a physiological substrate in vivo. In vitro, can use coumaryl-CoA, feruloyl-CoA and acetyl-CoA, although these three acyl donors may not be physiological in vivo. The polypeptide is Myricetin 3-O-glucosyl 1,2-rhamnoside 6'-O-caffeoyltransferase AT2 (Crocosmia x crocosmiiflora (Montbretia)).